We begin with the raw amino-acid sequence, 368 residues long: tRNA-specific 2-thiouridylase MnmA (368 aa).

Residues 12 to 19 (GMSGGVDS) and Met38 contribute to the ATP site. Residues 98 to 100 (NPD) form an interaction with target base in tRNA region. The active-site Nucleophile is the Cys103. Cys103 and Cys200 are oxidised to a cystine. Position 128 (Gly128) interacts with ATP. The tract at residues 150–152 (KDQ) is interaction with tRNA. Residue Cys200 is the Cysteine persulfide intermediate of the active site. Residues 311–312 (RY) form an interaction with tRNA region.

Belongs to the MnmA/TRMU family.

The protein localises to the cytoplasm. The enzyme catalyses S-sulfanyl-L-cysteinyl-[protein] + uridine(34) in tRNA + AH2 + ATP = 2-thiouridine(34) in tRNA + L-cysteinyl-[protein] + A + AMP + diphosphate + H(+). Functionally, catalyzes the 2-thiolation of uridine at the wobble position (U34) of tRNA, leading to the formation of s(2)U34. This chain is tRNA-specific 2-thiouridylase MnmA, found in Aeromonas hydrophila subsp. hydrophila (strain ATCC 7966 / DSM 30187 / BCRC 13018 / CCUG 14551 / JCM 1027 / KCTC 2358 / NCIMB 9240 / NCTC 8049).